A 397-amino-acid chain; its full sequence is Decapping and exoribonuclease protein (397 aa).

Substrate contacts are provided by residues Arg58, Glu101, and 131–133 (WRG). Glu192 contacts Mg(2+). The substrate site is built by Cys217 and Glu234. Positions 234, 236, 253, and 254 each coordinate Mg(2+). Substrate is bound by residues Lys255 and Gln280. At Thr392 the chain carries Phosphothreonine. Ser394 carries the phosphoserine modification.

This sequence belongs to the DXO/Dom3Z family. Requires Mg(2+) as cofactor.

The protein localises to the nucleus. The enzyme catalyses a 5'-end triphospho-ribonucleoside in mRNA + H2O = a 5'-end phospho-ribonucleoside in mRNA + diphosphate + H(+). It catalyses the reaction a 5'-end NAD(+)-phospho-ribonucleoside in mRNA + H2O = a 5'-end phospho-ribonucleoside in mRNA + NAD(+) + H(+). It carries out the reaction a 5'-end NAD(+)-phospho-ribonucleoside in snoRNA + H2O = a 5'-end phospho-ribonucleoside in snoRNA + NAD(+) + H(+). The catalysed reaction is a 5'-end (N(7)-methyl 5'-triphosphoguanosine)-ribonucleoside-ribonucleotide in mRNA + H2O = a (N(7)-methyl 5'-triphosphoguanosine)-nucleoside + a 5'-end phospho-ribonucleoside in mRNA + H(+). The enzyme catalyses a 5'-end FAD-phospho-ribonucleoside in mRNA + H2O = a 5'-end phospho-ribonucleoside in mRNA + FAD + H(+). It catalyses the reaction a 5'-end CoA-ribonucleoside in mRNA + H2O = 3'-dephospho-CoA + a 5'-end phospho-ribonucleoside in mRNA + H(+). Functionally, decapping enzyme for NAD-capped RNAs: specifically hydrolyzes the nicotinamide adenine dinucleotide (NAD) cap from a subset of RNAs by removing the entire NAD moiety from the 5'-end of an NAD-capped RNA. The NAD-cap is present at the 5'-end of some RNAs and snoRNAs. In contrast to the canonical 5'-end N7 methylguanosine (m7G) cap, the NAD cap promotes mRNA decay. Preferentially acts on NAD-capped transcripts in response to environmental stress. Also acts as a non-canonical decapping enzyme that removes the entire cap structure of m7G capped or incompletely capped RNAs and mediates their subsequent degradation. Specifically degrades pre-mRNAs with a defective 5'-end m7G cap and is part of a pre-mRNA capping quality control. Has decapping activity toward incomplete 5'-end m7G cap mRNAs such as unmethylated 5'-end-capped RNA (cap0), while it has no activity toward 2'-O-ribose methylated m7G cap (cap1). In contrast to canonical decapping enzymes DCP2 and NUDT16, which cleave the cap within the triphosphate linkage, the decapping activity releases the entire cap structure GpppN and a 5'-end monophosphate RNA. Also has 5'-3' exoribonuclease activities: The 5'-end monophosphate RNA is then degraded by the 5'-3' exoribonuclease activity, enabling this enzyme to decap and degrade incompletely capped mRNAs. Also possesses RNA 5'-pyrophosphohydrolase activity by hydrolyzing the 5'-end triphosphate to release pyrophosphates. Exhibits decapping activity towards FAD-capped RNAs. Exhibits decapping activity towards dpCoA-capped RNAs in vitro. This chain is Decapping and exoribonuclease protein, found in Rattus norvegicus (Rat).